Consider the following 585-residue polypeptide: Tyramine beta-hydroxylase (585 aa).

The first 21 residues, methionine 1 to glycine 21, serve as a signal peptide directing secretion. In terms of domain architecture, DOMON spans serine 31–serine 142. N-linked (GlcNAc...) asparagine glycosylation is found at asparagine 32 and asparagine 71. Residue tyrosine 206 is part of the active site. Intrachain disulfides connect cysteine 208–cysteine 258 and cysteine 247–cysteine 270. Cu(2+) contacts are provided by histidine 240 and histidine 241. Cu(2+)-binding residues include histidine 308, histidine 386, and histidine 388. 3 disulfide bridges follow: cysteine 365/cysteine 477, cysteine 369/cysteine 534, and cysteine 440/cysteine 462. Residue histidine 386 is part of the active site. N-linked (GlcNAc...) asparagine glycosylation is present at asparagine 449. A Cu(2+)-binding site is contributed by methionine 461. Asparagine 483 carries N-linked (GlcNAc...) asparagine glycosylation.

The protein belongs to the copper type II ascorbate-dependent monooxygenase family. Requires Cu(2+) as cofactor.

The protein localises to the cytoplasmic vesicle. It localises to the secretory vesicle. It is found in the synaptic vesicle. The catalysed reaction is tyramine + L-ascorbate + O2 = (R)-octopamine + L-dehydroascorbate + H2O. Its function is as follows. Catalyzes the hydroxylation of tyramine into octopamine, a neurotransmitter involved in pharyngeal pumping and egg laying. The sequence is that of Tyramine beta-hydroxylase (tbh-1) from Caenorhabditis briggsae.